A 455-amino-acid chain; its full sequence is MSNRGRQPSGPPPSRKRETKWSGKPKRYANFGAQSFDTVITGHLTQEQLDAYQRYFRIEEISNFLSVAKQQHKSIVDVLPSAKVDETDHYKRDPSPPPKYDKNGNRTNTRERRVTEALEKERHELVELAASSIKNYMIPSNYRRPSRTVERLYVPVKDYPDINFVGFLIGPRGNTLKKLQEDSGARLQIRGKGSVKEGKSSDGFGSSQTGTDIQDDLHVLITADSPLKISKAVKLVNEIIDKLIFSPQGMNFMKRDQLKELAVLNGTLRETKPFDPEAHEKKQQQQMDITKIVCKICGNIGHIARDCKQNNGKRPLDDNAENEPTTINKKARTDVPPPPPPPPPPAPPSSSTEISKQVPPPPPPPPPPAPSAAASGFATTENYKQGLVPPPPPPPPPPPPPVRSALVNFENNSKVLLTKEKEESGSSELKNTGESSSSSSGVPPSPPPPSSNVPR.

Disordered stretches follow at residues 1–28 (MSNRGRQPSGPPPSRKRETKWSGKPKRY), 86–110 (ETDHYKRDPSPPPKYDKNGNRTNTR), 189–210 (IRGKGSVKEGKSSDGFGSSQTG), and 305–455 (RDCK…NVPR). The region spanning 153 to 236 (YVPVKDYPDI…LKISKAVKLV (84 aa)) is the KH domain. The CCHC-type zinc-finger motif lies at 292–309 (IVCKICGNIGHIARDCKQ). 3 stretches are compositionally biased toward pro residues: residues 335–348 (VPPPPPPPPPPAPP), 358–370 (VPPPPPPPPPPAP), and 388–402 (VPPPPPPPPPPPPPV). Residues 426 to 442 (SSELKNTGESSSSSSGV) show a composition bias toward low complexity. The segment covering 443 to 455 (PPSPPPPSSNVPR) has biased composition (pro residues).

The protein belongs to the BBP/SF1 family.

It localises to the nucleus. Functionally, necessary for the splicing of pre-mRNA. Has a role in the recognition of the branch site (5'-UACUAAC-3'), the pyrimidine tract and the 3'-splice site at the 3'-end of introns. The protein is Branchpoint-bridging protein (BBP) of Candida albicans (strain SC5314 / ATCC MYA-2876) (Yeast).